The following is a 235-amino-acid chain: Small ribosomal subunit protein mS23 (235 aa).

The segment at 51–71 (PYPIQHTEPKDRGRAAQRPRN) is disordered.

Belongs to the mitochondrion-specific ribosomal protein mS23 family. Component of the mitochondrial small ribosomal subunit.

The protein resides in the mitochondrion. In Chaetomium globosum (strain ATCC 6205 / CBS 148.51 / DSM 1962 / NBRC 6347 / NRRL 1970) (Soil fungus), this protein is Small ribosomal subunit protein mS23 (RSM25).